Reading from the N-terminus, the 129-residue chain is Glycine cleavage system H protein (129 aa).

One can recognise a Lipoyl-binding domain in the interval 24-106; the sequence is TYTVGITEHA…YAGGWIFKIK (83 aa). K65 bears the N6-lipoyllysine mark.

Belongs to the GcvH family. In terms of assembly, the glycine cleavage system is composed of four proteins: P, T, L and H. It depends on (R)-lipoate as a cofactor.

Functionally, the glycine cleavage system catalyzes the degradation of glycine. The H protein shuttles the methylamine group of glycine from the P protein to the T protein. This chain is Glycine cleavage system H protein, found in Citrobacter koseri (strain ATCC BAA-895 / CDC 4225-83 / SGSC4696).